We begin with the raw amino-acid sequence, 398 residues long: Chalcone synthase 1 (398 aa).

58–65 provides a ligand contact to CoA; it reads KFKRMCDK. Cysteine 167 (acyl-thioester intermediate) is an active-site residue. Substrate-binding positions include threonine 200 and 219-220; that span reads GD. Alanine 311 contacts CoA.

Belongs to the thiolase-like superfamily. Chalcone/stilbene synthases family. As to quaternary structure, homodimer.

The enzyme catalyses (E)-4-coumaroyl-CoA + 3 malonyl-CoA + 3 H(+) = 2',4,4',6'-tetrahydroxychalcone + 3 CO2 + 4 CoA. Its pathway is secondary metabolite biosynthesis; flavonoid biosynthesis. In terms of biological role, the primary product of this enzyme is 4,2',4',6'-tetrahydroxychalcone (also termed naringenin-chalcone or chalcone) which can under specific conditions spontaneously isomerize into naringenin. This Oryza sativa subsp. indica (Rice) protein is Chalcone synthase 1 (CHS1).